A 358-amino-acid polypeptide reads, in one-letter code: Biotin synthase (358 aa).

A Radical SAM core domain is found at 44–272; sequence NRVRLNYLVN…DSEVRAAAGR (229 aa). [4Fe-4S] cluster is bound by residues Cys59, Cys63, and Cys66. Positions 103, 136, 196, and 267 each coordinate [2Fe-2S] cluster.

This sequence belongs to the radical SAM superfamily. Biotin synthase family. As to quaternary structure, homodimer. The cofactor is [4Fe-4S] cluster. Requires [2Fe-2S] cluster as cofactor.

It carries out the reaction (4R,5S)-dethiobiotin + (sulfur carrier)-SH + 2 reduced [2Fe-2S]-[ferredoxin] + 2 S-adenosyl-L-methionine = (sulfur carrier)-H + biotin + 2 5'-deoxyadenosine + 2 L-methionine + 2 oxidized [2Fe-2S]-[ferredoxin]. Its pathway is cofactor biosynthesis; biotin biosynthesis; biotin from 7,8-diaminononanoate: step 2/2. In terms of biological role, catalyzes the conversion of dethiobiotin (DTB) to biotin by the insertion of a sulfur atom into dethiobiotin via a radical-based mechanism. This Cutibacterium acnes (strain DSM 16379 / KPA171202) (Propionibacterium acnes) protein is Biotin synthase.